The following is a 145-amino-acid chain: Cell wall teichoic acid glycosylation protein GtcA (145 aa).

4 helical membrane passes run 21-41, 45-65, 91-111, and 122-142; these read IFMY…TFWL, ILNW…VLFA, FFGF…LLIS, and IWTN…IIFK.

It belongs to the GtrA family.

The protein resides in the cell membrane. Functionally, involved in the decoration of cell wall teichoic acid with galactose and glucose. In Listeria monocytogenes, this protein is Cell wall teichoic acid glycosylation protein GtcA (gtcA).